The following is a 403-amino-acid chain: tRNA(Met) cytidine acetate ligase (403 aa).

ATP contacts are provided by residues 7-20, Gly102, Asn168, and Arg193; that span reads IVEYNPFHNGHLYH.

It belongs to the TmcAL family.

It is found in the cytoplasm. It catalyses the reaction cytidine(34) in elongator tRNA(Met) + acetate + ATP = N(4)-acetylcytidine(34) in elongator tRNA(Met) + AMP + diphosphate. Its function is as follows. Catalyzes the formation of N(4)-acetylcytidine (ac(4)C) at the wobble position of elongator tRNA(Met), using acetate and ATP as substrates. First activates an acetate ion to form acetyladenylate (Ac-AMP) and then transfers the acetyl group to tRNA to form ac(4)C34. The sequence is that of tRNA(Met) cytidine acetate ligase from Clostridium tetani (strain Massachusetts / E88).